The following is a 347-amino-acid chain: Heat-inducible transcription repressor HrcA (347 aa).

Belongs to the HrcA family.

Its function is as follows. Negative regulator of class I heat shock genes (grpE-dnaK-dnaJ and groELS operons). Prevents heat-shock induction of these operons. The polypeptide is Heat-inducible transcription repressor HrcA (Mycobacterium sp. (strain JLS)).